A 306-amino-acid chain; its full sequence is ATP synthase gamma chain (306 aa).

Belongs to the ATPase gamma chain family. As to quaternary structure, F-type ATPases have 2 components, CF(1) - the catalytic core - and CF(0) - the membrane proton channel. CF(1) has five subunits: alpha(3), beta(3), gamma(1), delta(1), epsilon(1). CF(0) has three main subunits: a, b and c.

It localises to the cell membrane. Functionally, produces ATP from ADP in the presence of a proton gradient across the membrane. The gamma chain is believed to be important in regulating ATPase activity and the flow of protons through the CF(0) complex. The protein is ATP synthase gamma chain of Bifidobacterium animalis subsp. lactis (strain AD011).